The primary structure comprises 511 residues: V-type proton ATPase subunit B, brain isoform (511 aa).

An ATP-binding site is contributed by Arg-400.

The protein belongs to the ATPase alpha/beta chains family. V-ATPase is a heteromultimeric enzyme made up of two complexes: the ATP-hydrolytic V1 complex and the proton translocation V0 complex. The V1 complex consists of three catalytic AB heterodimers that form a heterohexamer, three peripheral stalks each consisting of EG heterodimers, one central rotor including subunits D and F, and the regulatory subunits C and H. The proton translocation complex V0 consists of the proton transport subunit a, a ring of proteolipid subunits c9c'', rotary subunit d, subunits e and f, and the accessory subunits ATP6AP1/Ac45 and ATP6AP2/PRR. As to expression, kidney; found in early distal nephron, encompassing thick ascending limbs and distal convoluted tubules and in the alpha-intercalated cells of the cortical collecting ducts (at protein level). Expressed in epididymal clear cells (at protein level). Mainly expressed in the organ of Corti and spiral ganglion neurons, in both the early postnatal cochlea (P2) and the adult cochlea (P30).

Its subcellular location is the apical cell membrane. The protein resides in the melanosome. It is found in the cytoplasm. The protein localises to the cytoplasmic vesicle. It localises to the secretory vesicle. Its subcellular location is the synaptic vesicle membrane. The protein resides in the clathrin-coated vesicle membrane. In terms of biological role, non-catalytic subunit of the V1 complex of vacuolar(H+)-ATPase (V-ATPase), a multisubunit enzyme composed of a peripheral complex (V1) that hydrolyzes ATP and a membrane integral complex (V0) that translocates protons. V-ATPase is responsible for acidifying and maintaining the pH of intracellular compartments and in some cell types, is targeted to the plasma membrane, where it is responsible for acidifying the extracellular environment. In renal intercalated cells, can partially compensate the lack of ATP6V1B1 and mediate secretion of protons (H+) into the urine under base-line conditions but not in conditions of acid load. In Mus musculus (Mouse), this protein is V-type proton ATPase subunit B, brain isoform (Atp6v1b2).